The sequence spans 221 residues: MSYGRPPPDVEGMTSLKVDNLTYRTSPDTLRRVFEKYGRVGDVYIPRDRYTKESRGFAFVRFHDKRDAEDAMDAMDGAVLDGRELRVQMARYGRPPDSHHSRRGPPPRRYGGGGYGRRSRSPRRRRRSRSRSRSRSRSRSRSRYSRSKSRSRTRSRSRSTSKSRSARRSKSKSSSVSRSRSRSRSRSRSRSPPPVSKREPKSRSRSKSPPESPEEEGAVSS.

At serine 2 the chain carries N-acetylserine. The residue at position 2 (serine 2) is a Phosphoserine. An RRM domain is found at 14 to 92 (TSLKVDNLTY…RELRVQMARY (79 aa)). 2 positions are modified to phosphothreonine: threonine 22 and threonine 25. Serine 26 bears the Phosphoserine mark. Position 52 is an N6-acetyllysine (lysine 52). The disordered stretch occupies residues 92 to 221 (YGRPPDSHHS…SPEEEGAVSS (130 aa)). Composition is skewed to basic residues over residues 117-171 (RRSR…RSKS) and 179-189 (SRSRSRSRSRS). Residues serine 189, serine 191, serine 204, serine 206, serine 208, serine 212, and serine 220 each carry the phosphoserine modification. Acidic residues predominate over residues 212 to 221 (SPEEEGAVSS).

The protein belongs to the splicing factor SR family. In terms of assembly, in vitro, self-associates and binds SRSF1/SFRS1 (ASF/SF2), SNRP70 and U2AF1 but not U2AF2. Binds SREK1/SFRS12. Interacts with CCNL1 and CCNL2. Interacts with SCAF11. Interacts with ZRSR2/U2AF1-RS2. Interacts with CCDC55 (via C-terminus). Interacts with BRDT. Extensively phosphorylated on serine residues in the RS domain. Phosphorylated by SRPK2 and this causes its redistribution from the nuclear speckle to nucleoplasm and controls cell fate decision in response to cisplatin treatment. KAT5/TIP60 inhibits its phosphorylation by preventing SRPK2 nuclear translocation. Post-translationally, acetylation on Lys-52 by KAT5/TIP60 promotes its proteasomal degradation. This effect is counterbalanced by HDAC6, which positively controls SRSF2 protein level by deacetylating it and preventing its proteasomal degradation.

It is found in the nucleus. It localises to the nucleoplasm. The protein resides in the nucleus speckle. Its function is as follows. Necessary for the splicing of pre-mRNA. It is required for formation of the earliest ATP-dependent splicing complex and interacts with spliceosomal components bound to both the 5'- and 3'-splice sites during spliceosome assembly. It also is required for ATP-dependent interactions of both U1 and U2 snRNPs with pre-mRNA. Interacts with other spliceosomal components, via the RS domains, to form a bridge between the 5'- and 3'-splice site binding components, U1 snRNP and U2AF. Binds to purine-rich RNA sequences, either 5'-AGSAGAGTA-3' (S=C or G) or 5'-GTTCGAGTA-3'. Can bind to beta-globin mRNA and commit it to the splicing pathway. The phosphorylated form (by SRPK2) is required for cellular apoptosis in response to cisplatin treatment. The protein is Serine/arginine-rich splicing factor 2 (SRSF2) of Pan troglodytes (Chimpanzee).